The following is a 296-amino-acid chain: 33 kDa chaperonin (296 aa).

Intrachain disulfides connect Cys233-Cys235 and Cys267-Cys270.

This sequence belongs to the HSP33 family. Post-translationally, under oxidizing conditions two disulfide bonds are formed involving the reactive cysteines. Under reducing conditions zinc is bound to the reactive cysteines and the protein is inactive.

It is found in the cytoplasm. Functionally, redox regulated molecular chaperone. Protects both thermally unfolding and oxidatively damaged proteins from irreversible aggregation. Plays an important role in the bacterial defense system toward oxidative stress. This Actinobacillus pleuropneumoniae serotype 3 (strain JL03) protein is 33 kDa chaperonin.